We begin with the raw amino-acid sequence, 181 residues long: Translation initiation factor IF-3 (181 aa).

This sequence belongs to the IF-3 family. As to quaternary structure, monomer.

The protein resides in the cytoplasm. In terms of biological role, IF-3 binds to the 30S ribosomal subunit and shifts the equilibrium between 70S ribosomes and their 50S and 30S subunits in favor of the free subunits, thus enhancing the availability of 30S subunits on which protein synthesis initiation begins. The chain is Translation initiation factor IF-3 from Idiomarina loihiensis (strain ATCC BAA-735 / DSM 15497 / L2-TR).